The primary structure comprises 165 residues: Aspartate carbamoyltransferase regulatory chain (165 aa).

Positions 121, 126, 149, and 152 each coordinate Zn(2+).

Belongs to the PyrI family. Contains catalytic and regulatory chains. The cofactor is Zn(2+).

Its function is as follows. Involved in allosteric regulation of aspartate carbamoyltransferase. This Methanoregula boonei (strain DSM 21154 / JCM 14090 / 6A8) protein is Aspartate carbamoyltransferase regulatory chain.